A 205-amino-acid polypeptide reads, in one-letter code: Ribonuclease HII (205 aa).

Residues 16–205 form the RNase H type-2 domain; it reads VSEVGIDEVG…KSFLKKSNLF (190 aa). Residues Asp-22, Glu-23, and Asp-118 each coordinate a divalent metal cation.

Belongs to the RNase HII family. It depends on Mn(2+) as a cofactor. Mg(2+) is required as a cofactor.

Its subcellular location is the cytoplasm. It catalyses the reaction Endonucleolytic cleavage to 5'-phosphomonoester.. Endonuclease that specifically degrades the RNA of RNA-DNA hybrids. The sequence is that of Ribonuclease HII from Prochlorococcus marinus (strain MIT 9215).